The sequence spans 108 residues: ATP-dependent Clp protease adapter protein ClpS (108 aa).

This sequence belongs to the ClpS family. In terms of assembly, binds to the N-terminal domain of the chaperone ClpA.

Its function is as follows. Involved in the modulation of the specificity of the ClpAP-mediated ATP-dependent protein degradation. This Mycobacterium leprae (strain TN) protein is ATP-dependent Clp protease adapter protein ClpS.